The following is a 651-amino-acid chain: Cysteine-rich receptor-like protein kinase 42 (651 aa).

The signal sequence occupies residues 1 to 28; that stretch reads MRCLTKTRSFHYVIIFYSFFFLPFLSSS. The Extracellular portion of the chain corresponds to 29–251; the sequence is SDDQRTTVSG…HHKFHVLFNK (223 aa). 2 consecutive Gnk2-homologous domains span residues 35 to 135 and 137 to 236; these read TVSG…TYEF and DESV…DHKF. N-linked (GlcNAc...) asparagine glycans are attached at residues Asn79 and Asn151. Residues 252-272 traverse the membrane as a helical segment; sequence GVIVAIVLTTSAFVMLILLAT. The Cytoplasmic segment spans residues 273–651; it reads YVIMTKVSKT…SSESSTTRTI (379 aa). The region spanning 315 to 604 is the Protein kinase domain; that stretch reads FSHKKMLGQG…IPSPTSPPFL (290 aa). ATP-binding positions include 321–329 and Lys343; that span reads LGQGGNGTV. Tyr388 is subject to Phosphotyrosine. Catalysis depends on Asp440, which acts as the Proton acceptor. 2 positions are modified to phosphoserine: Ser444 and Ser473. Phosphothreonine is present on residues Thr474 and Thr479. Tyr487 bears the Phosphotyrosine mark.

The protein belongs to the protein kinase superfamily. Ser/Thr protein kinase family. CRK subfamily.

It localises to the membrane. It carries out the reaction L-seryl-[protein] + ATP = O-phospho-L-seryl-[protein] + ADP + H(+). The catalysed reaction is L-threonyl-[protein] + ATP = O-phospho-L-threonyl-[protein] + ADP + H(+). The sequence is that of Cysteine-rich receptor-like protein kinase 42 (CRK42) from Arabidopsis thaliana (Mouse-ear cress).